We begin with the raw amino-acid sequence, 447 residues long: Argininosuccinate synthase (447 aa).

Residues 17–25 and A43 each bind ATP; that span reads AFSGGLDTS. Y99 serves as a coordination point for L-citrulline. ATP is bound by residues G129 and T131. Residues T131, N135, and D136 each coordinate L-aspartate. Residue N135 coordinates L-citrulline. D136 contacts ATP. Positions 139 and 192 each coordinate L-citrulline. D194 is an ATP binding site. The L-citrulline site is built by T201, E203, and E280.

This sequence belongs to the argininosuccinate synthase family. Type 2 subfamily. In terms of assembly, homotetramer.

It is found in the cytoplasm. The enzyme catalyses L-citrulline + L-aspartate + ATP = 2-(N(omega)-L-arginino)succinate + AMP + diphosphate + H(+). Its pathway is amino-acid biosynthesis; L-arginine biosynthesis; L-arginine from L-ornithine and carbamoyl phosphate: step 2/3. The chain is Argininosuccinate synthase from Shigella flexneri serotype 5b (strain 8401).